Reading from the N-terminus, the 445-residue chain is tRNA-2-methylthio-N(6)-dimethylallyladenosine synthase (445 aa).

The 115-residue stretch at 7 to 121 (KHFYIKSFGC…LPELIEKAAS (115 aa)) folds into the MTTase N-terminal domain. Residues Cys16, Cys52, Cys84, Cys156, Cys160, and Cys163 each coordinate [4Fe-4S] cluster. In terms of domain architecture, Radical SAM core spans 142 to 374 (RQVGASAFLT…QALLNQQQFD (233 aa)). Residues 377–438 (QQTIGRKATV…PNSVKGQFLD (62 aa)) form the TRAM domain.

This sequence belongs to the methylthiotransferase family. MiaB subfamily. In terms of assembly, monomer. [4Fe-4S] cluster serves as cofactor.

Its subcellular location is the cytoplasm. The catalysed reaction is N(6)-dimethylallyladenosine(37) in tRNA + (sulfur carrier)-SH + AH2 + 2 S-adenosyl-L-methionine = 2-methylsulfanyl-N(6)-dimethylallyladenosine(37) in tRNA + (sulfur carrier)-H + 5'-deoxyadenosine + L-methionine + A + S-adenosyl-L-homocysteine + 2 H(+). In terms of biological role, catalyzes the methylthiolation of N6-(dimethylallyl)adenosine (i(6)A), leading to the formation of 2-methylthio-N6-(dimethylallyl)adenosine (ms(2)i(6)A) at position 37 in tRNAs that read codons beginning with uridine. In Zymomonas mobilis subsp. mobilis (strain ATCC 31821 / ZM4 / CP4), this protein is tRNA-2-methylthio-N(6)-dimethylallyladenosine synthase.